The sequence spans 310 residues: Transcription factor UNE12 (310 aa).

Disordered regions lie at residues H124 to P156 and S229 to D253. The 50-residue stretch at Q152–L201 folds into the bHLH domain.

As to quaternary structure, homodimer. As to expression, expressed constitutively in roots, leaves, stems, and flowers.

Its subcellular location is the nucleus. In terms of biological role, required for ovule fertilization. The sequence is that of Transcription factor UNE12 (UNE12) from Arabidopsis thaliana (Mouse-ear cress).